Consider the following 861-residue polypeptide: Protein argonaute-4 (861 aa).

In terms of domain architecture, PAZ spans 219 to 338 (PIIEFMCEVL…LPLEVCNIVA (120 aa)). One can recognise a Piwi domain in the interval 509–820 (LIVVILPGKT…VAFRARYHLV (312 aa)). The interval 825-846 (DSAEGSHVSGQSNGRDPQALAK) is disordered.

This sequence belongs to the argonaute family. Ago subfamily. In terms of assembly, interacts with EIF4B, IMP8, PRMT5, TNRC6A and TNRC6B. Interacts with ZFP36. Ubiquitinated on surface-exposed lysines by a SCF-like E3 ubiquitin-protein ligase complex containing ZSWIM8 during target-directed microRNA degradation (TDMD), a process that mediates degradation of microRNAs (miRNAs). Ubiquitination by the SCF-like E3 ubiquitin-protein ligase complex containing ZSWIM8 leads to its subsequent degradation, thereby exposing miRNAs for degradation. ZSWIM8 recognizes and binds AGO4 when it is engaged with a TDMD target.

The protein resides in the cytoplasm. It localises to the P-body. In terms of biological role, required for RNA-mediated gene silencing (RNAi). Binds to short RNAs such as microRNAs (miRNAs) and represses the translation of mRNAs which are complementary to them. Lacks endonuclease activity and does not appear to cleave target mRNAs. This chain is Protein argonaute-4 (Ago4), found in Mus musculus (Mouse).